The primary structure comprises 493 residues: Glycerol kinase (493 aa).

Thr-11 contacts ADP. ATP contacts are provided by Thr-11, Thr-12, and Ser-13. Residue Thr-11 participates in sn-glycerol 3-phosphate binding. Arg-15 contacts ADP. Positions 80, 81, 132, and 241 each coordinate sn-glycerol 3-phosphate. Positions 80, 81, 132, 241, and 242 each coordinate glycerol. ADP is bound by residues Thr-263 and Gly-306. ATP is bound by residues Thr-263, Gly-306, Gln-310, and Gly-408. Gly-408 is an ADP binding site.

Belongs to the FGGY kinase family.

The enzyme catalyses glycerol + ATP = sn-glycerol 3-phosphate + ADP + H(+). The protein operates within polyol metabolism; glycerol degradation via glycerol kinase pathway; sn-glycerol 3-phosphate from glycerol: step 1/1. Inhibited by fructose 1,6-bisphosphate (FBP). Its function is as follows. Key enzyme in the regulation of glycerol uptake and metabolism. Catalyzes the phosphorylation of glycerol to yield sn-glycerol 3-phosphate. The protein is Glycerol kinase of Cereibacter sphaeroides (strain KD131 / KCTC 12085) (Rhodobacter sphaeroides).